The chain runs to 355 residues: MKIVADENLAFTDYFFSEFGDIQHKAGRTLTHTDVQDAEALLVRSVTAVNESLIQNTALKYVGSATIGTDHLDIQALEKQGITWANAAGCNAQAVAEYVITALLHLDASLLEQQEKFTLGIVGLGNVGKRLAYMAQLLGWKVIGFDPFVQLDSIENVSFQTLLQQANAVSIHVPLTKKGEHATYHLFDEKAFAALQPNTILINSARGPVVKEAALIEDIQCTQRKVVLDVFEHEPVISEGLLNMLALATPHIAGYSLEGKARGTQMIYEAFCQKFGYDINKRFETQLPACEDYFSGHDLKAVLKQKLSQIYDIAQYDANIRACVKEGKVEQKAFDLLRKNYPLRREWAAHGGPQA.

Positions 45 and 66 each coordinate substrate. Position 146 (D146) interacts with NAD(+). R206 is an active-site residue. D229 is an NAD(+) binding site. E234 is an active-site residue. Residue H251 is the Proton donor of the active site. An NAD(+)-binding site is contributed by G254. Position 255 (Y255) interacts with substrate.

The protein belongs to the D-isomer specific 2-hydroxyacid dehydrogenase family. PdxB subfamily. Homodimer.

It is found in the cytoplasm. The enzyme catalyses 4-phospho-D-erythronate + NAD(+) = (R)-3-hydroxy-2-oxo-4-phosphooxybutanoate + NADH + H(+). Its pathway is cofactor biosynthesis; pyridoxine 5'-phosphate biosynthesis; pyridoxine 5'-phosphate from D-erythrose 4-phosphate: step 2/5. Catalyzes the oxidation of erythronate-4-phosphate to 3-hydroxy-2-oxo-4-phosphonooxybutanoate. This chain is Erythronate-4-phosphate dehydrogenase, found in Acinetobacter baumannii (strain SDF).